Consider the following 674-residue polypeptide: DNA ligase (674 aa).

Residues 34 to 38 (DSEYD), 83 to 84 (SL), and E114 contribute to the NAD(+) site. K116 (N6-AMP-lysine intermediate) is an active-site residue. Residues R137, E174, K290, and K314 each coordinate NAD(+). The Zn(2+) site is built by C405, C408, C424, and C429. Positions 587–674 (QSGTQFDGKM…KLSLIENTKF (88 aa)) constitute a BRCT domain.

It belongs to the NAD-dependent DNA ligase family. LigA subfamily. Mg(2+) is required as a cofactor. The cofactor is Mn(2+).

The catalysed reaction is NAD(+) + (deoxyribonucleotide)n-3'-hydroxyl + 5'-phospho-(deoxyribonucleotide)m = (deoxyribonucleotide)n+m + AMP + beta-nicotinamide D-nucleotide.. In terms of biological role, DNA ligase that catalyzes the formation of phosphodiester linkages between 5'-phosphoryl and 3'-hydroxyl groups in double-stranded DNA using NAD as a coenzyme and as the energy source for the reaction. It is essential for DNA replication and repair of damaged DNA. This Endomicrobium trichonymphae protein is DNA ligase.